The primary structure comprises 292 residues: Small ribosomal subunit biogenesis GTPase RsgA (292 aa).

The CP-type G domain occupies 64–221 (RSELFRPAVA…LVDTPGFSSL (158 aa)). GTP is bound by residues 113 to 116 (NKMD) and 164 to 172 (GPSGVGKST). Zn(2+)-binding residues include cysteine 245, cysteine 250, histidine 252, and cysteine 258.

Belongs to the TRAFAC class YlqF/YawG GTPase family. RsgA subfamily. In terms of assembly, monomer. Associates with 30S ribosomal subunit, binds 16S rRNA. Requires Zn(2+) as cofactor.

The protein localises to the cytoplasm. Functionally, one of several proteins that assist in the late maturation steps of the functional core of the 30S ribosomal subunit. Helps release RbfA from mature subunits. May play a role in the assembly of ribosomal proteins into the subunit. Circularly permuted GTPase that catalyzes slow GTP hydrolysis, GTPase activity is stimulated by the 30S ribosomal subunit. The chain is Small ribosomal subunit biogenesis GTPase RsgA from Clostridium botulinum (strain Loch Maree / Type A3).